A 541-amino-acid chain; its full sequence is Apolipoprotein N-acyltransferase (541 aa).

The next 6 helical transmembrane spans lie at 21 to 41, 54 to 74, 89 to 109, 116 to 136, 157 to 177, and 189 to 209; these read MSWF…WYSL, LTSL…SWML, VLIS…FFIV, ILWC…YFLC, FGGF…GISF, and YVWL…YEYL. A CN hydrolase domain is found at 219–500; that stretch reads LRVAVIQPAS…PGVLQVSLPM (282 aa). The active-site Proton acceptor is Glu265. Residue Lys350 is part of the active site. The active-site Nucleophile is Cys405. Residues 506–526 traverse the membrane as a helical segment; it reads LYAFWGDFPMIFLSLLSIGCI.

The protein belongs to the CN hydrolase family. Apolipoprotein N-acyltransferase subfamily.

Its subcellular location is the cell inner membrane. It catalyses the reaction N-terminal S-1,2-diacyl-sn-glyceryl-L-cysteinyl-[lipoprotein] + a glycerophospholipid = N-acyl-S-1,2-diacyl-sn-glyceryl-L-cysteinyl-[lipoprotein] + a 2-acyl-sn-glycero-3-phospholipid + H(+). The protein operates within protein modification; lipoprotein biosynthesis (N-acyl transfer). Its function is as follows. Catalyzes the phospholipid dependent N-acylation of the N-terminal cysteine of apolipoprotein, the last step in lipoprotein maturation. The polypeptide is Apolipoprotein N-acyltransferase (Chlamydia caviae (strain ATCC VR-813 / DSM 19441 / 03DC25 / GPIC) (Chlamydophila caviae)).